Consider the following 377-residue polypeptide: tRNA N6-adenosine threonylcarbamoyltransferase (377 aa).

2 residues coordinate Fe cation: His129 and His133. Substrate is bound by residues 151–155 (LVSGG), Asp184, Gly197, and Asn298. Asp326 is a binding site for Fe cation. Positions 358–377 (DGAAAKSDPAIGSGRKGPKA) are disordered.

The protein belongs to the KAE1 / TsaD family. Fe(2+) is required as a cofactor.

The protein localises to the cytoplasm. It catalyses the reaction L-threonylcarbamoyladenylate + adenosine(37) in tRNA = N(6)-L-threonylcarbamoyladenosine(37) in tRNA + AMP + H(+). Required for the formation of a threonylcarbamoyl group on adenosine at position 37 (t(6)A37) in tRNAs that read codons beginning with adenine. Is involved in the transfer of the threonylcarbamoyl moiety of threonylcarbamoyl-AMP (TC-AMP) to the N6 group of A37, together with TsaE and TsaB. TsaD likely plays a direct catalytic role in this reaction. This chain is tRNA N6-adenosine threonylcarbamoyltransferase, found in Maricaulis maris (strain MCS10) (Caulobacter maris).